Consider the following 124-residue polypeptide: Large ribosomal subunit protein bL12 (124 aa).

Belongs to the bacterial ribosomal protein bL12 family. Homodimer. Part of the ribosomal stalk of the 50S ribosomal subunit. Forms a multimeric L10(L12)X complex, where L10 forms an elongated spine to which 2 to 4 L12 dimers bind in a sequential fashion. Binds GTP-bound translation factors.

Functionally, forms part of the ribosomal stalk which helps the ribosome interact with GTP-bound translation factors. Is thus essential for accurate translation. The polypeptide is Large ribosomal subunit protein bL12 (Leptothrix cholodnii (strain ATCC 51168 / LMG 8142 / SP-6) (Leptothrix discophora (strain SP-6))).